Consider the following 211-residue polypeptide: Ferritin heavy chain (211 aa).

Residues 1–20 (MKAVLFAVAALLAVCIPISA) form the signal peptide. A Ferritin-like diiron domain is found at 35–191 (ITMQQSCRGS…GKASTLKKML (157 aa)). Residues Cys41 and Cys150 are joined by a disulfide bond. The Fe cation site is built by Glu52, Glu87, His90, Glu136, and Gln173.

The protein belongs to the ferritin family. In terms of assembly, oligomer of 12 light (L) chains and 12 heavy (H) chains; L and H chains are disulfide-linked. The functional molecule forms a roughly spherical shell with a diameter of 12 nm and contains a central cavity into which the insoluble ferric iron core is deposited.

Its subcellular location is the golgi apparatus. It is found in the secreted. The catalysed reaction is 4 Fe(2+) + O2 + 4 H(+) = 4 Fe(3+) + 2 H2O. Stores iron in a soluble, non-toxic, readily available form. Important for iron homeostasis. Iron is taken up in the ferrous form and deposited as ferric hydroxides after oxidation. Ferritin is composed of a heavy (H) chain which is responsible for the oxidation and uptake of ferrous iron, and a light (L) chain which facilitates the nucleation of the ferrihydrite iron core. In Papilio xuthus (Asian swallowtail butterfly), this protein is Ferritin heavy chain.